Reading from the N-terminus, the 200-residue chain is Ras-related protein Rab-10 (200 aa).

S18, G19, V20, G21, K22, T23, C24, N35, T36, S40, and T41 together coordinate GTP. T23 contacts Mg(2+). 2 consecutive short sequence motifs (switch) follow at residues 32–46 (DAFN…GIDF) and 64–81 (DTAG…YYRG). Residues T41 and D64 each contribute to the Mg(2+) site. G67 lines the GTP pocket. At T73 the chain carries Phosphothreonine; by LRRK2. N6-acetyllysine is present on K102. K102 participates in a covalent cross-link: Glycyl lysine isopeptide (Lys-Gly) (interchain with G-Cter in ubiquitin). 4 residues coordinate GTP: N122, K123, D125, and M126. K136 is covalently cross-linked (Glycyl lysine isopeptide (Lys-Gly) (interchain with G-Cter in ubiquitin)). Residues S152, A153, and K154 each contribute to the GTP site. A Glycyl lysine isopeptide (Lys-Gly) (interchain with G-Cter in ubiquitin) cross-link involves residue K154. S-geranylgeranyl cysteine attachment occurs at residues C199 and C200.

This sequence belongs to the small GTPase superfamily. Rab family. In terms of assembly, interacts with MYO5A; mediates the transport to the plasma membrane of SLC2A4/GLUT4 storage vesicles. Interacts with GDI1 and with GDI2; negatively regulates RAB10 association with membranes and activation. Interacts (GDP-bound form) with LLGL1; the interaction is direct and promotes RAB10 association with membranes and activation through competition with the Rab inhibitor GDI1. Interacts with EXOC4; probably associates with the exocyst. Interacts (GTP-bound form) with MICALCL, MICAL1, MICAL3, EHBP1 and EHBP1L1; at least in case of MICAL1 two molecules of RAB10 can bind to one molecule of MICAL1. Interacts with TBC1D13. Interacts with SEC16A. Interacts with CHM and CHML. Interacts with LRRK2; interaction facilitates phosphorylation of Thr-73. Interacts (when phosphorylated on Thr-73) with RILPL1 and RILPL2. Interacts with TBC1D21. Interacts with MARCKS. Requires Mg(2+) as cofactor. Post-translationally, ubiquitinated upon Legionella pneumophila infection. Ubiquitination does not lead to proteasomal degradation. Phosphorylation of Thr-73 in the switch II region by LRRK2 prevents the association of dRAB regulatory proteins, including CHM, CHML and RAB GDP dissociation inhibitors GDI1 and GDI2. Phosphorylation of Thr-73 by LRRK2 is stimulated by RAB29 and RAB32. Phosphorylation by LRRK2 is required for localization to stressed lysosomes. Expressed in the hippocampus. Expressed in neutrophils (at protein level). Expressed in the testis (at protein level).

It localises to the cytoplasmic vesicle membrane. The protein resides in the golgi apparatus membrane. The protein localises to the golgi apparatus. Its subcellular location is the trans-Golgi network membrane. It is found in the endosome membrane. It localises to the recycling endosome membrane. The protein resides in the cytoplasmic vesicle. The protein localises to the phagosome membrane. Its subcellular location is the cytoplasm. It is found in the cytoskeleton. It localises to the cilium basal body. The protein resides in the endoplasmic reticulum membrane. The protein localises to the perinuclear region. Its subcellular location is the lysosome. The catalysed reaction is GTP + H2O = GDP + phosphate + H(+). With respect to regulation, regulated by guanine nucleotide exchange factors (GEFs) DENND4C and RABIF which promote the exchange of bound GDP for free GTP. Regulated by GTPase activating proteins (GAPs) including TBC1D21 which increase the GTP hydrolysis activity. Inhibited by GDP dissociation inhibitors GDI1 and GDI2 which prevent Rab-GDP dissociation. Functionally, the small GTPases Rab are key regulators of intracellular membrane trafficking, from the formation of transport vesicles to their fusion with membranes. Rabs cycle between an inactive GDP-bound form and an active GTP-bound form that is able to recruit to membranes different set of downstream effectors directly responsible for vesicle formation, movement, tethering and fusion. That Rab is mainly involved in the biosynthetic transport of proteins from the Golgi to the plasma membrane. Regulates, for instance, SLC2A4/GLUT4 glucose transporter-enriched vesicles delivery to the plasma membrane. In parallel, it regulates the transport of TLR4, a toll-like receptor to the plasma membrane and therefore may be important for innate immune response. Also plays a specific role in asymmetric protein transport to the plasma membrane. In neurons, it is involved in axonogenesis through regulation of vesicular membrane trafficking toward the axonal plasma membrane. In epithelial cells, it regulates transport from the Golgi to the basolateral membrane. May play a role in the basolateral recycling pathway and in phagosome maturation. May play a role in endoplasmic reticulum dynamics and morphology controlling tubulation along microtubules and tubules fusion. Together with LRRK2, RAB8A, and RILPL1, it regulates ciliogenesis. When phosphorylated by LRRK2 on Thr-73, binds RILPL1 and inhibits ciliogenesis. Participates in the export of a subset of neosynthesized proteins through a Rab8-Rab10-Rab11-dependent endososomal export route. Targeted to and stabilized on stressed lysosomes through LRRK2 phosphorylation where it promotes the extracellular release of lysosomal content through EHBP1 and EHNP1L1 effector proteins. Its function is as follows. (Microbial infection) Upon Legionella pneumophila infection promotes endoplasmic reticulum recruitment and bacterial replication. Plays a role in remodeling the Legionella-containing vacuole (LCV) into an endoplasmic reticulum-like vacuole. This is Ras-related protein Rab-10 from Homo sapiens (Human).